A 319-amino-acid chain; its full sequence is MNHVVKHNHTAVTKVTEFILMGITDNPGLQAPLFGLFLIIYLVTVIGNLGMVILTYLDSKLHTPMYFFLRHLSITDLGYSTVIAPKMLVNFIVHKNTISYNWYATQLAFFEIFIISELFILSAMAYDRYVAICKPLLYVIIMAEKVLWVLVIVPYLYSTFVSLFLTIKLFKLSFCGSNIISYFYCDCIPLMSILCSDTNELELIILIFSGCNLLFSLSIVLISYMFILVAILRMNSRKGRYKAFSTCSSHLTVVIMFYGTLLFIYLQPKSSHTLAIDKMASVFYTLLIPMLNPLIYSLRNKEVKDALKRTLTNRFKIPI.

Residues 1–31 (MNHVVKHNHTAVTKVTEFILMGITDNPGLQA) lie on the Extracellular side of the membrane. Asn8 is a glycosylation site (N-linked (GlcNAc...) asparagine). The chain crosses the membrane as a helical span at residues 32–52 (PLFGLFLIIYLVTVIGNLGMV). The Cytoplasmic segment spans residues 53 to 60 (ILTYLDSK). The chain crosses the membrane as a helical span at residues 61–81 (LHTPMYFFLRHLSITDLGYST). The Extracellular portion of the chain corresponds to 82–105 (VIAPKMLVNFIVHKNTISYNWYAT). A helical transmembrane segment spans residues 106 to 126 (QLAFFEIFIISELFILSAMAY). Over 127 to 145 (DRYVAICKPLLYVIIMAEK) the chain is Cytoplasmic. A helical membrane pass occupies residues 146 to 166 (VLWVLVIVPYLYSTFVSLFLT). The Extracellular portion of the chain corresponds to 167-203 (IKLFKLSFCGSNIISYFYCDCIPLMSILCSDTNELEL). A helical membrane pass occupies residues 204-223 (IILIFSGCNLLFSLSIVLIS). The Cytoplasmic segment spans residues 224–243 (YMFILVAILRMNSRKGRYKA). Residues 244–264 (FSTCSSHLTVVIMFYGTLLFI) traverse the membrane as a helical segment. The Extracellular portion of the chain corresponds to 265–277 (YLQPKSSHTLAID). A helical membrane pass occupies residues 278–298 (KMASVFYTLLIPMLNPLIYSL). Residues 299-319 (RNKEVKDALKRTLTNRFKIPI) are Cytoplasmic-facing.

The protein belongs to the G-protein coupled receptor 1 family.

Its subcellular location is the cell membrane. Functionally, odorant receptor. The sequence is that of Olfactory receptor 8K1 (OR8K1) from Homo sapiens (Human).